The primary structure comprises 672 residues: Bifunctional polymyxin resistance protein ArnA (672 aa).

Residues 1-310 (MKAIVFAYHD…EMGMVPQAKL (310 aa)) form a formyltransferase ArnAFT region. H104 functions as the Proton donor; for formyltransferase activity in the catalytic mechanism. (6R)-10-formyltetrahydrofolate contacts are provided by residues R114 and 136–140 (VSRAD). The segment at 320 to 672 (RRTRVLILGV…HADNVTDTQG (353 aa)) is dehydrogenase ArnADH. Residues D353 and 374-375 (DI) contribute to the NAD(+) site. Residues A399, Y404, and 438–439 (TS) contribute to the UDP-alpha-D-glucuronate site. E440 functions as the Proton acceptor; for decarboxylase activity in the catalytic mechanism. UDP-alpha-D-glucuronate is bound by residues R466, N498, 532-541 (KLVDGGAQKR), and Y619. Catalysis depends on R625, which acts as the Proton donor; for decarboxylase activity.

This sequence in the N-terminal section; belongs to the Fmt family. UDP-L-Ara4N formyltransferase subfamily. It in the C-terminal section; belongs to the NAD(P)-dependent epimerase/dehydratase family. UDP-glucuronic acid decarboxylase subfamily. Homohexamer, formed by a dimer of trimers.

The enzyme catalyses UDP-alpha-D-glucuronate + NAD(+) = UDP-beta-L-threo-pentopyranos-4-ulose + CO2 + NADH. It catalyses the reaction UDP-4-amino-4-deoxy-beta-L-arabinose + (6R)-10-formyltetrahydrofolate = UDP-4-deoxy-4-formamido-beta-L-arabinose + (6S)-5,6,7,8-tetrahydrofolate + H(+). The protein operates within nucleotide-sugar biosynthesis; UDP-4-deoxy-4-formamido-beta-L-arabinose biosynthesis; UDP-4-deoxy-4-formamido-beta-L-arabinose from UDP-alpha-D-glucuronate: step 1/3. It participates in nucleotide-sugar biosynthesis; UDP-4-deoxy-4-formamido-beta-L-arabinose biosynthesis; UDP-4-deoxy-4-formamido-beta-L-arabinose from UDP-alpha-D-glucuronate: step 3/3. Its pathway is bacterial outer membrane biogenesis; lipopolysaccharide biosynthesis. In terms of biological role, bifunctional enzyme that catalyzes the oxidative decarboxylation of UDP-glucuronic acid (UDP-GlcUA) to UDP-4-keto-arabinose (UDP-Ara4O) and the addition of a formyl group to UDP-4-amino-4-deoxy-L-arabinose (UDP-L-Ara4N) to form UDP-L-4-formamido-arabinose (UDP-L-Ara4FN). The modified arabinose is attached to lipid A and is required for resistance to polymyxin and cationic antimicrobial peptides. This Pectobacterium carotovorum subsp. carotovorum (strain PC1) protein is Bifunctional polymyxin resistance protein ArnA.